The primary structure comprises 785 residues: Endonuclease MutS2 (785 aa).

335-342 (GPNTGGKT) is a binding site for ATP. The Smr domain occupies 710–785 (LDLRGERYED…GNGVTIVEFK (76 aa)).

This sequence belongs to the DNA mismatch repair MutS family. MutS2 subfamily. In terms of assembly, homodimer. Binds to stalled ribosomes, contacting rRNA.

Functionally, endonuclease that is involved in the suppression of homologous recombination and thus may have a key role in the control of bacterial genetic diversity. Its function is as follows. Acts as a ribosome collision sensor, splitting the ribosome into its 2 subunits. Detects stalled/collided 70S ribosomes which it binds and splits by an ATP-hydrolysis driven conformational change. Acts upstream of the ribosome quality control system (RQC), a ribosome-associated complex that mediates the extraction of incompletely synthesized nascent chains from stalled ribosomes and their subsequent degradation. Probably generates substrates for RQC. This is Endonuclease MutS2 from Listeria monocytogenes serotype 4b (strain F2365).